Consider the following 257-residue polypeptide: Ciliary microtubule associated protein 1B (257 aa).

STPGR repeat units lie at residues 103 to 129 (PGPG…LSAR), 182 to 207 (PGPG…MTGR), and 218 to 243 (PGPG…FGIR).

Belongs to the CIMAP family.

The protein localises to the cell projection. It localises to the cilium. It is found in the flagellum. This chain is Ciliary microtubule associated protein 1B (cimap1b), found in Danio rerio (Zebrafish).